Here is a 417-residue protein sequence, read N- to C-terminus: Serine hydroxymethyltransferase (417 aa).

Residues Leu117 and 121–123 (GHL) each bind (6S)-5,6,7,8-tetrahydrofolate. Lys226 carries the post-translational modification N6-(pyridoxal phosphate)lysine.

This sequence belongs to the SHMT family. Homodimer. It depends on pyridoxal 5'-phosphate as a cofactor.

Its subcellular location is the cytoplasm. The enzyme catalyses (6R)-5,10-methylene-5,6,7,8-tetrahydrofolate + glycine + H2O = (6S)-5,6,7,8-tetrahydrofolate + L-serine. Its pathway is one-carbon metabolism; tetrahydrofolate interconversion. The protein operates within amino-acid biosynthesis; glycine biosynthesis; glycine from L-serine: step 1/1. In terms of biological role, catalyzes the reversible interconversion of serine and glycine with tetrahydrofolate (THF) serving as the one-carbon carrier. This reaction serves as the major source of one-carbon groups required for the biosynthesis of purines, thymidylate, methionine, and other important biomolecules. Also exhibits THF-independent aldolase activity toward beta-hydroxyamino acids, producing glycine and aldehydes, via a retro-aldol mechanism. The protein is Serine hydroxymethyltransferase of Syntrophus aciditrophicus (strain SB).